Reading from the N-terminus, the 95-residue chain is Aspartyl/glutamyl-tRNA(Asn/Gln) amidotransferase subunit C (95 aa).

This sequence belongs to the GatC family. In terms of assembly, heterotrimer of A, B and C subunits.

It carries out the reaction L-glutamyl-tRNA(Gln) + L-glutamine + ATP + H2O = L-glutaminyl-tRNA(Gln) + L-glutamate + ADP + phosphate + H(+). The enzyme catalyses L-aspartyl-tRNA(Asn) + L-glutamine + ATP + H2O = L-asparaginyl-tRNA(Asn) + L-glutamate + ADP + phosphate + 2 H(+). Allows the formation of correctly charged Asn-tRNA(Asn) or Gln-tRNA(Gln) through the transamidation of misacylated Asp-tRNA(Asn) or Glu-tRNA(Gln) in organisms which lack either or both of asparaginyl-tRNA or glutaminyl-tRNA synthetases. The reaction takes place in the presence of glutamine and ATP through an activated phospho-Asp-tRNA(Asn) or phospho-Glu-tRNA(Gln). The protein is Aspartyl/glutamyl-tRNA(Asn/Gln) amidotransferase subunit C of Brucella anthropi (strain ATCC 49188 / DSM 6882 / CCUG 24695 / JCM 21032 / LMG 3331 / NBRC 15819 / NCTC 12168 / Alc 37) (Ochrobactrum anthropi).